A 132-amino-acid chain; its full sequence is Interleukin-4 (132 aa).

The first 24 residues, 1–24 (MGLTSQLIPTLVCLLALTSTFVHG), serve as a signal peptide directing secretion. Residues Asn28, Asn45, Asn62, Asn83, Asn95, and Asn101 are each glycosylated (N-linked (GlcNAc...) asparagine). Intrachain disulfides connect Cys48-Cys84 and Cys70-Cys104.

Belongs to the IL-4/IL-13 family.

The protein localises to the secreted. Participates in at least several B-cell activation processes as well as of other cell types. It is a costimulator of DNA-synthesis. It induces the expression of class II MHC molecules on resting B-cells. It enhances both secretion and cell surface expression of IgE and IgG1. It also regulates the expression of the low affinity Fc receptor for IgE (CD23) on both lymphocytes and monocytes. Positively regulates IL31RA expression in macrophages. Stimulates autophagy in dendritic cells by interfering with mTORC1 signaling and through the induction of RUFY4. The sequence is that of Interleukin-4 (IL4) from Canis lupus familiaris (Dog).